We begin with the raw amino-acid sequence, 151 residues long: Putative pre-16S rRNA nuclease (151 aa).

The protein belongs to the YqgF nuclease family.

It localises to the cytoplasm. Functionally, could be a nuclease involved in processing of the 5'-end of pre-16S rRNA. This is Putative pre-16S rRNA nuclease from Prochlorococcus marinus subsp. pastoris (strain CCMP1986 / NIES-2087 / MED4).